Here is a 77-residue protein sequence, read N- to C-terminus: Large ribosomal subunit protein bL28 (77 aa).

Belongs to the bacterial ribosomal protein bL28 family.

The chain is Large ribosomal subunit protein bL28 from Acidovorax ebreus (strain TPSY) (Diaphorobacter sp. (strain TPSY)).